The primary structure comprises 326 residues: Undecaprenyl-phosphate 4-deoxy-4-formamido-L-arabinose transferase (326 aa).

A run of 2 helical transmembrane segments spans residues 235–255 (MLSVIGSMIALLGFAFSLLLI) and 270–290 (VFMLFAVLFIFIGAQFIGMGL).

This sequence belongs to the glycosyltransferase 2 family.

The protein localises to the cell inner membrane. It carries out the reaction UDP-4-deoxy-4-formamido-beta-L-arabinose + di-trans,octa-cis-undecaprenyl phosphate = 4-deoxy-4-formamido-alpha-L-arabinopyranosyl di-trans,octa-cis-undecaprenyl phosphate + UDP. Its pathway is glycolipid biosynthesis; 4-amino-4-deoxy-alpha-L-arabinose undecaprenyl phosphate biosynthesis; 4-amino-4-deoxy-alpha-L-arabinose undecaprenyl phosphate from UDP-4-deoxy-4-formamido-beta-L-arabinose and undecaprenyl phosphate: step 1/2. The protein operates within bacterial outer membrane biogenesis; lipopolysaccharide biosynthesis. Catalyzes the transfer of 4-deoxy-4-formamido-L-arabinose from UDP to undecaprenyl phosphate. The modified arabinose is attached to lipid A and is required for resistance to polymyxin and cationic antimicrobial peptides. The protein is Undecaprenyl-phosphate 4-deoxy-4-formamido-L-arabinose transferase of Sodalis glossinidius (strain morsitans).